Reading from the N-terminus, the 310-residue chain is Ribosomal protein uL3 glutamine methyltransferase (310 aa).

It belongs to the protein N5-glutamine methyltransferase family. PrmB subfamily.

It carries out the reaction L-glutaminyl-[ribosomal protein uL3] + S-adenosyl-L-methionine = N(5)-methyl-L-glutaminyl-[ribosomal protein uL3] + S-adenosyl-L-homocysteine + H(+). Functionally, specifically methylates large ribosomal subunit protein uL3 on 'Gln-150'. The sequence is that of Ribosomal protein uL3 glutamine methyltransferase from Shigella dysenteriae serotype 1 (strain Sd197).